Reading from the N-terminus, the 240-residue chain is Probable transcriptional regulatory protein MADE_1004275 (240 aa).

This sequence belongs to the TACO1 family.

The protein resides in the cytoplasm. The protein is Probable transcriptional regulatory protein MADE_1004275 of Alteromonas mediterranea (strain DSM 17117 / CIP 110805 / LMG 28347 / Deep ecotype).